A 642-amino-acid polypeptide reads, in one-letter code: Chaperone protein DnaK (642 aa).

Threonine 198 carries the post-translational modification Phosphothreonine; by autocatalysis. Positions aspartate 578–lysine 589 are enriched in basic and acidic residues. The tract at residues aspartate 578–lysine 642 is disordered. Residues alanine 603–aspartate 619 show a composition bias toward low complexity.

Belongs to the heat shock protein 70 family.

Its function is as follows. Acts as a chaperone. The protein is Chaperone protein DnaK of Hahella chejuensis (strain KCTC 2396).